The primary structure comprises 87 residues: Retinal rod rhodopsin-sensitive cGMP 3',5'-cyclic phosphodiesterase subunit gamma (87 aa).

N-acetylmethionine is present on methionine 1. The tract at residues 16–54 is disordered; it reads VVGGPVTPRKGPPKFKQRQTRQFKSKPPKKGVQGFGDDI. The span at 26-44 shows a compositional bias: basic residues; that stretch reads GPPKFKQRQTRQFKSKPPK.

Belongs to the rod/cone cGMP-PDE gamma subunit family. As to quaternary structure, oligomer composed of two catalytic chains (alpha and beta), an inhibitory chain (gamma) and the delta chain.

It catalyses the reaction 3',5'-cyclic GMP + H2O = GMP + H(+). In terms of biological role, participates in processes of transmission and amplification of the visual signal. cGMP-PDEs are the effector molecules in G-protein-mediated phototransduction in vertebrate rods and cones. In Cavia porcellus (Guinea pig), this protein is Retinal rod rhodopsin-sensitive cGMP 3',5'-cyclic phosphodiesterase subunit gamma (PDE6G).